A 349-amino-acid polypeptide reads, in one-letter code: Desmethyl-yatein O-methyltransferase (349 aa).

Gly-193, Asp-216, Asp-236, Met-237, Met-249, and Lys-250 together coordinate S-adenosyl-L-homocysteine. His-254 acts as the Proton acceptor in catalysis. Catalysis depends on residues Glu-282 and Glu-314.

The protein belongs to the class I-like SAM-binding methyltransferase superfamily. Cation-independent O-methyltransferase family. COMT subfamily. As to quaternary structure, homodimer. In terms of tissue distribution, mostly expressed in stems, and, to a lower extent, in leaves.

The catalysed reaction is (-)-5'-demethylyatein + S-adenosyl-L-methionine = (-)-yatein + S-adenosyl-L-homocysteine + H(+). It participates in aromatic compound metabolism; phenylpropanoid biosynthesis. Functionally, O-methyltransferase involved in the biosynthesis of etoposide, a chemotherapeutic compound of the topoisomerase inhibitor family. Catalyzes the methylation of (-)-5'-demethylyatein to produce (-)-yatein. In Sinopodophyllum hexandrum (Himalayan may apple), this protein is Desmethyl-yatein O-methyltransferase.